The primary structure comprises 175 residues: Photosynthetic NDH subunit of subcomplex B 4, chloroplastic (175 aa).

Residues 1–24 (MAEAFTSFTFTNLHIPSSYNHSPK) constitute a chloroplast transit peptide. The helical transmembrane segment at 95–111 (VYMFYIMFTCWGCLYFG) threads the bilayer.

Part of the chloroplast NDH complex, composed of a mixture of chloroplast and nucleus encoded subunits. Component of the NDH subcomplex B, at least composed of PnsB1, PnsB2, PnsB3, PnsB4 and PnsB5.

Its subcellular location is the plastid. The protein resides in the chloroplast thylakoid membrane. Its function is as follows. NDH shuttles electrons from NAD(P)H:plastoquinone, via FMN and iron-sulfur (Fe-S) centers, to quinones in the photosynthetic chain and possibly in a chloroplast respiratory chain. The immediate electron acceptor for the enzyme in this species is believed to be plastoquinone. Couples the redox reaction to proton translocation, and thus conserves the redox energy in a proton gradient. The sequence is that of Photosynthetic NDH subunit of subcomplex B 4, chloroplastic from Arabidopsis thaliana (Mouse-ear cress).